Here is a 403-residue protein sequence, read N- to C-terminus: 3-(3-hydroxy-phenyl)propionate transporter (403 aa).

Residues 1-16 lie on the Cytoplasmic side of the membrane; the sequence is MSTRTPSSSSSRLMLT. The helical transmembrane segment at 17 to 37 threads the bilayer; the sequence is IGLCFLVALMEGLDLQAAGIA. The Periplasmic portion of the chain corresponds to 38–53; sequence AGGIAQAFALDKMQMG. A helical transmembrane segment spans residues 54–74; sequence WIFSAGILGLLPGALVGGMLA. Residues 75 to 81 lie on the Cytoplasmic side of the membrane; that stretch reads DRYGRKR. A helical membrane pass occupies residues 82-102; it reads ILIGSVALFGLFSLATAIAWD. The Periplasmic portion of the chain corresponds to 103–105; sequence FPS. Residues 106–126 form a helical membrane-spanning segment; sequence LVFARLMTGVGLGAALPNLIA. Over 127–142 the chain is Cytoplasmic; it reads LTSEAAGPRFRGTAVS. The chain crosses the membrane as a helical span at residues 143 to 163; sequence LMYCGVPIGAALAATLGFAGA. A topological domain (periplasmic) is located at residue Asn164. A helical transmembrane segment spans residues 165–185; that stretch reads LAWQTVFWVGGVVPLILVPLL. The Cytoplasmic segment spans residues 186 to 217; sequence MRWLPESAVFAGEKQSAPPLRALFAPETATAT. A helical membrane pass occupies residues 218–238; sequence LLLWLCYFFTLLVVYMLINWL. Residues 239–253 lie on the Periplasmic side of the membrane; that stretch reads PLLLVEQGFQPSQAA. The chain crosses the membrane as a helical span at residues 254–274; the sequence is GVMFALQMGAASGTLMLGALM. The Cytoplasmic segment spans residues 275-279; the sequence is DKLRP. Residues 280–300 traverse the membrane as a helical segment; it reads VTMSLLIYSGMLASLLALGTV. The Periplasmic portion of the chain corresponds to 301–306; sequence SSFNGM. A helical transmembrane segment spans residues 307 to 327; it reads LLAGFVAGLFATGGQSVLYAL. The Cytoplasmic portion of the chain corresponds to 328 to 339; it reads APLFYSSQIRAT. The helical transmembrane segment at 340–360 threads the bilayer; that stretch reads GVGTAVAVGRLGAMSGPLLAG. Over 361-369 the chain is Periplasmic; sequence KMLALGTGT. Residues 370–390 traverse the membrane as a helical segment; that stretch reads VGVMAASAPGILVAGLAVFIL. At 391-403 the chain is on the cytoplasmic side; that stretch reads MSRRSRIQPCADA.

This sequence belongs to the major facilitator superfamily. Aromatic acid:H(+) symporter (AAHS) (TC 2.A.1.15) family.

Its subcellular location is the cell inner membrane. It carries out the reaction 3-(3-hydroxyphenyl)propanoate(in) + H(+)(in) = 3-(3-hydroxyphenyl)propanoate(out) + H(+)(out). With respect to regulation, inhibited by carbonyl cyanide m-chlorophenylhydrazone (CCCP), which dissipates the proton motive force. Uptake of 3-(3-hydroxyphenyl)propionate (3HPP) across the cytoplasmic membrane. Transport is driven by the proton motive force. Does not transport benzoate, 3-hydroxybenzoate or gentisate. The sequence is that of 3-(3-hydroxy-phenyl)propionate transporter from Escherichia coli (strain K12).